The following is a 539-amino-acid chain: CTP synthase (539 aa).

Positions 1 to 269 are amidoligase domain; that stretch reads MSATKYIFVT…DERVLSKLKL (269 aa). CTP is bound at residue Ser-15. Ser-15 serves as a coordination point for UTP. Position 16–21 (16–21) interacts with ATP; it reads SLGKGI. Position 56 (Tyr-56) interacts with L-glutamine. Asp-73 contacts ATP. Positions 73 and 143 each coordinate Mg(2+). Residues 150–152, 190–195, and Lys-226 contribute to the CTP site; these read DIE and KTKPTQ. UTP contacts are provided by residues 190-195 and Lys-226; that span reads KTKPTQ. Residues 295–537 enclose the Glutamine amidotransferase type-1 domain; that stretch reads NIALVGKYVE…VKAANDFAKG (243 aa). Gly-357 serves as a coordination point for L-glutamine. The active-site Nucleophile; for glutamine hydrolysis is Cys-384. Residues 385 to 388, Glu-408, and Arg-465 contribute to the L-glutamine site; that span reads LGMQ. Catalysis depends on residues His-510 and Glu-512.

Belongs to the CTP synthase family. In terms of assembly, homotetramer.

The enzyme catalyses UTP + L-glutamine + ATP + H2O = CTP + L-glutamate + ADP + phosphate + 2 H(+). The catalysed reaction is L-glutamine + H2O = L-glutamate + NH4(+). It catalyses the reaction UTP + NH4(+) + ATP = CTP + ADP + phosphate + 2 H(+). The protein operates within pyrimidine metabolism; CTP biosynthesis via de novo pathway; CTP from UDP: step 2/2. Allosterically activated by GTP, when glutamine is the substrate; GTP has no effect on the reaction when ammonia is the substrate. The allosteric effector GTP functions by stabilizing the protein conformation that binds the tetrahedral intermediate(s) formed during glutamine hydrolysis. Inhibited by the product CTP, via allosteric rather than competitive inhibition. Functionally, catalyzes the ATP-dependent amination of UTP to CTP with either L-glutamine or ammonia as the source of nitrogen. Regulates intracellular CTP levels through interactions with the four ribonucleotide triphosphates. The sequence is that of CTP synthase from Cytophaga hutchinsonii (strain ATCC 33406 / DSM 1761 / CIP 103989 / NBRC 15051 / NCIMB 9469 / D465).